Here is an 863-residue protein sequence, read N- to C-terminus: Nitrate reductase [NADH] (863 aa).

Cysteine 137 contacts Mo-molybdopterin. Residues 484–559 (KKYVTKAMLE…LEQFYIAELA (76 aa)) enclose the Cytochrome b5 heme-binding domain. 2 residues coordinate heme: histidine 519 and histidine 542. Residues 602–719 (KKQKAAELKE…KGPIGHFHYD (118 aa)) enclose the FAD-binding FR-type domain. Residues 659–662 (RAYT), 676–680 (VVKIY), phenylalanine 688, 693–695 (KFS), and threonine 746 each bind FAD.

Belongs to the nitrate reductase family. As to quaternary structure, homodimer. It depends on FAD as a cofactor. Mo-molybdopterin serves as cofactor. Requires heme as cofactor.

The enzyme catalyses nitrite + NAD(+) + H2O = nitrate + NADH + H(+). Its function is as follows. Nitrate reductase is a key enzyme involved in the first step of nitrate assimilation in plants, fungi and bacteria. In Ulva prolifera (Green seaweed), this protein is Nitrate reductase [NADH].